A 391-amino-acid polypeptide reads, in one-letter code: ATP phosphoribosyltransferase regulatory subunit (391 aa).

This sequence belongs to the class-II aminoacyl-tRNA synthetase family. HisZ subfamily. In terms of assembly, heteromultimer composed of HisG and HisZ subunits.

It localises to the cytoplasm. The protein operates within amino-acid biosynthesis; L-histidine biosynthesis; L-histidine from 5-phospho-alpha-D-ribose 1-diphosphate: step 1/9. Its function is as follows. Required for the first step of histidine biosynthesis. May allow the feedback regulation of ATP phosphoribosyltransferase activity by histidine. This Clostridium kluyveri (strain ATCC 8527 / DSM 555 / NBRC 12016 / NCIMB 10680 / K1) protein is ATP phosphoribosyltransferase regulatory subunit.